A 67-amino-acid polypeptide reads, in one-letter code: Large ribosomal subunit protein bL35 (67 aa).

Over residues 1 to 32 the composition is skewed to basic residues; it reads MPKLKNHSGAKKRFAKTATGKYKRRKAGRKHL. A disordered region spans residues 1-54; sequence MPKLKNHSGAKKRFAKTATGKYKRRKAGRKHLLTPQSGSRKREMRQTGIIKPES.

It belongs to the bacterial ribosomal protein bL35 family.

The sequence is that of Large ribosomal subunit protein bL35 from Elusimicrobium minutum (strain Pei191).